The chain runs to 218 residues: RNA polymerase sigma-H factor (218 aa).

The Polymerase core binding signature appears at 62 to 75; sequence DIVQEGMIGLYKSI. Positions 182–201 form a DNA-binding region, H-T-H motif; the sequence is YQEISDELNRHVKSIDNALQ.

The protein belongs to the sigma-70 factor family. In terms of assembly, interacts transiently with the RNAP core.

Its function is as follows. Sigma factors are initiation factors that promote the attachment of RNA polymerase (RNAP) to specific initiation sites and are then released. This sigma factor is involved in the transition to post-exponential phase in the beginning of sporulation. It is also required for transcription of several stationary phase genes. Association with the RNAP core increases rapidly in early exponential phase, and reamins constant expression level after. The polypeptide is RNA polymerase sigma-H factor (sigH) (Bacillus subtilis (strain 168)).